Here is a 270-residue protein sequence, read N- to C-terminus: Undecaprenyl-diphosphatase 3 (270 aa).

7 helical membrane passes run 5 to 25 (YYIL…PIPI), 42 to 62 (IEGF…VLLI), 89 to 109 (FFFI…GVLF), 117 to 137 (LKGV…LWII), 192 to 212 (FSFL…ITDI), 220 to 240 (TLFV…YISL), and 250 to 270 (GNLK…LIFL).

The protein belongs to the UppP family.

It is found in the cell membrane. It catalyses the reaction di-trans,octa-cis-undecaprenyl diphosphate + H2O = di-trans,octa-cis-undecaprenyl phosphate + phosphate + H(+). In terms of biological role, catalyzes the dephosphorylation of undecaprenyl diphosphate (UPP). Confers resistance to bacitracin. This Bacillus anthracis protein is Undecaprenyl-diphosphatase 3.